Reading from the N-terminus, the 292-residue chain is 5,10-methylenetetrahydrofolate reductase (292 aa).

Residue Glu-26 is the Proton donor/acceptor of the active site. Thr-57 serves as a coordination point for NADH. Residues Tyr-58, Ala-60, His-86, Arg-116, Gly-117, Asp-118, Ala-130, Tyr-150, His-154, Ala-157, Asp-163, Asn-166, Arg-169, and Lys-170 each contribute to the FAD site. Asp-118 serves as a coordination point for (6S)-5-methyl-5,6,7,8-tetrahydrofolate. Gln-181 lines the NADH pocket. (6S)-5-methyl-5,6,7,8-tetrahydrofolate is bound by residues Gln-181, Gln-217, and Arg-277.

The protein belongs to the methylenetetrahydrofolate reductase family. It depends on FAD as a cofactor.

The catalysed reaction is (6S)-5-methyl-5,6,7,8-tetrahydrofolate + NAD(+) = (6R)-5,10-methylene-5,6,7,8-tetrahydrofolate + NADH + H(+). Its pathway is one-carbon metabolism; tetrahydrofolate interconversion. The protein operates within amino-acid biosynthesis; L-methionine biosynthesis via de novo pathway. Functionally, catalyzes the NADH-dependent reduction of 5,10-methylenetetrahydrofolate to 5-methyltetrahydrofolate. Is required to provide the methyl group necessary for methionine synthetase to convert homocysteine to methionine; the methyl group is given by 5-methyltetrahydrofolate. The chain is 5,10-methylenetetrahydrofolate reductase (metF) from Neisseria meningitidis serogroup B (strain ATCC BAA-335 / MC58).